A 122-amino-acid polypeptide reads, in one-letter code: Large ribosomal subunit protein uL18 (122 aa).

The segment at 1–27 is disordered; sequence MATLSKKQQTQKRHKRLRRHLNGTNHR. Residues 9–27 show a composition bias toward basic residues; sequence QTQKRHKRLRRHLNGTNHR.

The protein belongs to the universal ribosomal protein uL18 family. Part of the 50S ribosomal subunit; part of the 5S rRNA/L5/L18/L25 subcomplex. Contacts the 5S and 23S rRNAs.

In terms of biological role, this is one of the proteins that bind and probably mediate the attachment of the 5S RNA into the large ribosomal subunit, where it forms part of the central protuberance. The sequence is that of Large ribosomal subunit protein uL18 from Prochlorococcus marinus (strain MIT 9211).